Consider the following 263-residue polypeptide: Chymotrypsinogen B (263 aa).

The signal sequence occupies residues 1–18 (MAFLWLVSCFALVGATFG). Intrachain disulfides connect cysteine 19–cysteine 140, cysteine 60–cysteine 76, cysteine 154–cysteine 219, cysteine 186–cysteine 200, and cysteine 209–cysteine 238. A Peptidase S1 domain is found at 34 to 261 (IVNGEDAIPG…LMPWVQEILE (228 aa)). Histidine 75 functions as the Charge relay system in the catalytic mechanism. Serine 93 is modified (phosphoserine). Residue aspartate 120 is the Charge relay system of the active site. The active-site Charge relay system is the serine 213.

Belongs to the peptidase S1 family.

The protein resides in the secreted. It is found in the extracellular space. The catalysed reaction is Preferential cleavage: Tyr-|-Xaa, Trp-|-Xaa, Phe-|-Xaa, Leu-|-Xaa.. The chain is Chymotrypsinogen B (Ctrb1) from Mus musculus (Mouse).